Consider the following 130-residue polypeptide: Methylglyoxal synthase (130 aa).

Positions M1–C130 constitute an MGS-like domain. Residues H11, K15, T37–T40, and S57–G58 contribute to the substrate site. D63 functions as the Proton donor/acceptor in the catalytic mechanism. Residue H90 coordinates substrate.

The protein belongs to the methylglyoxal synthase family.

The enzyme catalyses dihydroxyacetone phosphate = methylglyoxal + phosphate. In terms of biological role, catalyzes the formation of methylglyoxal from dihydroxyacetone phosphate. This Burkholderia multivorans (strain ATCC 17616 / 249) protein is Methylglyoxal synthase.